Reading from the N-terminus, the 355-residue chain is 3-isopropylmalate dehydrogenase (355 aa).

R90, R100, R128, and D222 together coordinate substrate. D222, D246, and D250 together coordinate Mg(2+). Position 280–292 (280–292 (GSAPDIAGKGIAN)) interacts with NAD(+).

The protein belongs to the isocitrate and isopropylmalate dehydrogenases family. LeuB type 1 subfamily. As to quaternary structure, homodimer. Requires Mg(2+) as cofactor. The cofactor is Mn(2+).

The protein resides in the cytoplasm. It carries out the reaction (2R,3S)-3-isopropylmalate + NAD(+) = 4-methyl-2-oxopentanoate + CO2 + NADH. It participates in amino-acid biosynthesis; L-leucine biosynthesis; L-leucine from 3-methyl-2-oxobutanoate: step 3/4. Its function is as follows. Catalyzes the oxidation of 3-carboxy-2-hydroxy-4-methylpentanoate (3-isopropylmalate) to 3-carboxy-4-methyl-2-oxopentanoate. The product decarboxylates to 4-methyl-2 oxopentanoate. This is 3-isopropylmalate dehydrogenase from Burkholderia mallei (strain ATCC 23344).